The following is a 395-amino-acid chain: MQLSIQAIIGFVVAAGLAVASELPSPMTVNLERRKMLVTKNDTVDFKAVRKQANALNYKYDKLLRNFRKNTGRDHPLLHLLLDLIDKRDGKGDVDLDDIGEGQLWAGDVQFGQSKFKIDFDTGSADTLVNPFVYFPHRSKSSRKTHHTFSTAYGDGTTASGFIYTDDLKIGGYKAKDVAIGLSVTKFINDEDNQGIAGMSFPAVQSFPKKFDPFFVALVKQKVVPEPVFQFTLKRGSGSTLHLGGIDNSRFQGELSYVDVNPEDGFWISEGKVNGKKIDACIDTGSSIIFGPIDEVREVITKMDGVTPFTAGGALHGAFDCSKPPKLDFEFAGQKFNLGENQVSFGKYQGQCVLSIMGQKNLPMNAWVVGDSFLQTASVVFDMGKNRMGFAPSSN.

The N-terminal stretch at Met-1–Ala-20 is a signal peptide. The propeptide at Ser-21 to Arg-88 is removed in mature form. Residue Asn-41 is glycosylated (N-linked (GlcNAc...) asparagine). One can recognise a Peptidase A1 domain in the interval Trp-105–Ala-391. Residues Asp-121 and Asp-283 contribute to the active site. Residues Cys-321 and Cys-352 are joined by a disulfide bond.

It belongs to the peptidase A1 family.

It is found in the secreted. Its activity is regulated as follows. Inhibited by pepstatin A. Dominant secreted aspartyl protease that has a clear preference for aromatic residues in the P1' position directly adjacent to the cleavage site and, in particular, Trp. In addition, it generally cleaves peptides containing Lys, Arg, Phe, Tyr, or Nle (norleucine) in the P1 position, Nle and Glu at P2, and Arg and Val at P2'. Has important roles in facilitating the interaction of the yeast with the external environment. Is able to rapidly hydrolyze Staphylococcus aureus protein A, an important S.aureus virulence factor involved in immune evasion and biofilm formation. Shows anti-biofilm properties and thus plays a role in inter-kingdom interactions, beneficial for host skin health. This Malassezia globosa (strain ATCC MYA-4612 / CBS 7966) (Dandruff-associated fungus) protein is Secreted aspartyl protease 1.